A 568-amino-acid chain; its full sequence is 2-succinyl-5-enolpyruvyl-6-hydroxy-3-cyclohexene-1-carboxylate synthase (568 aa).

The protein belongs to the TPP enzyme family. MenD subfamily. As to quaternary structure, homodimer. It depends on Mg(2+) as a cofactor. Requires Mn(2+) as cofactor. The cofactor is thiamine diphosphate.

It catalyses the reaction isochorismate + 2-oxoglutarate + H(+) = 5-enolpyruvoyl-6-hydroxy-2-succinyl-cyclohex-3-ene-1-carboxylate + CO2. Its pathway is quinol/quinone metabolism; 1,4-dihydroxy-2-naphthoate biosynthesis; 1,4-dihydroxy-2-naphthoate from chorismate: step 2/7. It functions in the pathway quinol/quinone metabolism; menaquinone biosynthesis. Its function is as follows. Catalyzes the thiamine diphosphate-dependent decarboxylation of 2-oxoglutarate and the subsequent addition of the resulting succinic semialdehyde-thiamine pyrophosphate anion to isochorismate to yield 2-succinyl-5-enolpyruvyl-6-hydroxy-3-cyclohexene-1-carboxylate (SEPHCHC). This Haemophilus influenzae (strain PittEE) protein is 2-succinyl-5-enolpyruvyl-6-hydroxy-3-cyclohexene-1-carboxylate synthase.